Here is a 361-residue protein sequence, read N- to C-terminus: 3-dehydroquinate synthase (361 aa).

NAD(+)-binding positions include 60–65 (DAEAAK), 94–98 (GATTD), 118–119 (TT), lysine 131, and lysine 140. Glutamate 173, histidine 242, and histidine 258 together coordinate Zn(2+).

Belongs to the sugar phosphate cyclases superfamily. Dehydroquinate synthase family. Co(2+) serves as cofactor. Zn(2+) is required as a cofactor. The cofactor is NAD(+).

The protein localises to the cytoplasm. The enzyme catalyses 7-phospho-2-dehydro-3-deoxy-D-arabino-heptonate = 3-dehydroquinate + phosphate. The protein operates within metabolic intermediate biosynthesis; chorismate biosynthesis; chorismate from D-erythrose 4-phosphate and phosphoenolpyruvate: step 2/7. Its function is as follows. Catalyzes the conversion of 3-deoxy-D-arabino-heptulosonate 7-phosphate (DAHP) to dehydroquinate (DHQ). The chain is 3-dehydroquinate synthase from Cutibacterium acnes (strain DSM 16379 / KPA171202) (Propionibacterium acnes).